A 1375-amino-acid polypeptide reads, in one-letter code: DNA-directed RNA polymerase subunit beta (1375 aa).

It belongs to the RNA polymerase beta chain family. The RNAP catalytic core consists of 2 alpha, 1 beta, 1 beta' and 1 omega subunit. When a sigma factor is associated with the core the holoenzyme is formed, which can initiate transcription.

The catalysed reaction is RNA(n) + a ribonucleoside 5'-triphosphate = RNA(n+1) + diphosphate. In terms of biological role, DNA-dependent RNA polymerase catalyzes the transcription of DNA into RNA using the four ribonucleoside triphosphates as substrates. This is DNA-directed RNA polymerase subunit beta from Methylibium petroleiphilum (strain ATCC BAA-1232 / LMG 22953 / PM1).